The following is a 447-amino-acid chain: Protein cortex (447 aa).

WD repeat units lie at residues 108-148, 149-188, 198-237, 281-325, 344-380, and 384-423; these read TYSY…IGHG, FAEY…KIMS, NMNC…ISWR, DSDW…VRDT, GELV…DQWG, and SGLD…NKMK. A D-box motif is present at residues 384–395; that stretch reads SGLDRVRTMIFS.

This sequence belongs to the WD repeat CORT family.

The protein localises to the cytoplasm. In terms of biological role, controls wing pigmentation patterning by regulating scale cell development, thereby playing a key role in mimicry and crypsis. Probably acts as an activator of the anaphase promoting complex/cyclosome (APC/C) that promotes the ubiquitin ligase activity and substrate specificity of the APC/C. The sequence is that of Protein cortex from Heliconius melpomene (Postman butterfly).